Consider the following 707-residue polypeptide: Heat shock protein hsp88 (707 aa).

Positions 662 to 692 are enriched in basic and acidic residues; sequence EAEKAAKKAEEEARKAKEAAEKAAQEGAKDD. The segment at 662-707 is disordered; it reads EAEKAAKKAEEEARKAKEAAEKAAQEGAKDDEMTDADAPKPVVEEA.

This sequence belongs to the heat shock protein 70 family. As to quaternary structure, binds hsp30 independent of temperature or substrate. In terms of processing, the N-terminus is blocked.

It localises to the cytoplasm. The chain is Heat shock protein hsp88 (hsp88) from Neurospora crassa (strain ATCC 24698 / 74-OR23-1A / CBS 708.71 / DSM 1257 / FGSC 987).